A 203-amino-acid chain; its full sequence is dITP/XTP pyrophosphatase (203 aa).

7–12 (TGNRDK) provides a ligand contact to substrate. Residue Asp73 is the Proton acceptor of the active site. Residue Asp73 coordinates Mg(2+). Residues Ser74, 155–158 (FGYD), Lys178, and 183–184 (HR) each bind substrate.

Belongs to the HAM1 NTPase family. As to quaternary structure, homodimer. The cofactor is Mg(2+).

It catalyses the reaction XTP + H2O = XMP + diphosphate + H(+). The enzyme catalyses dITP + H2O = dIMP + diphosphate + H(+). The catalysed reaction is ITP + H2O = IMP + diphosphate + H(+). Its function is as follows. Pyrophosphatase that catalyzes the hydrolysis of nucleoside triphosphates to their monophosphate derivatives, with a high preference for the non-canonical purine nucleotides XTP (xanthosine triphosphate), dITP (deoxyinosine triphosphate) and ITP. Seems to function as a house-cleaning enzyme that removes non-canonical purine nucleotides from the nucleotide pool, thus preventing their incorporation into DNA/RNA and avoiding chromosomal lesions. This Wolinella succinogenes (strain ATCC 29543 / DSM 1740 / CCUG 13145 / JCM 31913 / LMG 7466 / NCTC 11488 / FDC 602W) (Vibrio succinogenes) protein is dITP/XTP pyrophosphatase.